Reading from the N-terminus, the 569-residue chain is Mitochondrial import receptor subunit tomm-70 (569 aa).

Residues 1–12 (MVETTGISDQTK) are Mitochondrial intermembrane-facing. A helical transmembrane segment spans residues 13 to 32 (KVLIGVAAAATVAGVGYLVY). At 33–569 (KSFGGSDLER…KRAAEMLDMY (537 aa)) the chain is on the cytoplasmic side. 4 TPR repeats span residues 44 to 77 (LEEI…AGPN), 119 to 152 (TKAY…DSSL), 221 to 254 (DQKQ…PPAM), and 510 to 544 (LHLL…APPR).

This sequence belongs to the Tom70 family. Forms part of the preprotein translocase complex of the outer mitochondrial membrane (TOM complex). Expressed in body wall muscle cells, the pharynx and structures in the tail.

It is found in the mitochondrion outer membrane. In terms of biological role, receptor that accelerates the import of all mitochondrial precursor proteins. This is Mitochondrial import receptor subunit tomm-70 from Caenorhabditis elegans.